A 286-amino-acid chain; its full sequence is Putative ribosome-inactivating protein (286 aa).

Positions 1–21 are cleaved as a signal peptide; the sequence is MNRFSVLMCLVILSIFHGVPT. N-linked (GlcNAc...) asparagine glycosylation is found at asparagine 103 and asparagine 110. Glutamate 185 is an active-site residue. N-linked (GlcNAc...) asparagine glycosylation is present at asparagine 252.

Belongs to the ribosome-inactivating protein family. Type 1 RIP subfamily.

The catalysed reaction is Endohydrolysis of the N-glycosidic bond at one specific adenosine on the 28S rRNA.. The chain is Putative ribosome-inactivating protein from Cucumis ficifolius (Cucumis figarei).